A 684-amino-acid polypeptide reads, in one-letter code: Calpain-14 (684 aa).

One can recognise a Calpain catalytic domain in the interval 43 to 336 (LFEDTSFPAT…FVLLVICKLT (294 aa)). Residues Cys101, His254, and Asn278 contribute to the active site. Residues 337 to 503 (PGLLSQEAAQ…KHIFYEIGSN (167 aa)) form a domain III region. The tract at residues 504-517 (SGVVFSKEIEDQNE) is linker. The interval 518–683 (RQDEFFTKFF…KPEWMMMALY (166 aa)) is domain IV. EF-hand domains lie at 557-592 (FSLEACQGILALLDLNASGTMSIQEFRDLWKQLKLS), 586-621 (WKQLKLSQKVFHKQDRGSGYLNWEQLHAAMREAGIM), and 651-684 (LRVENMEDVFQNLTQDGKGIYLQKPEWMMMALYS). Ca(2+)-binding residues include Asp570, Asn572, Ser574, Thr576, and Glu581.

It belongs to the peptidase C2 family. As to expression, not expressed in tissues tested.

Its function is as follows. Calcium-regulated non-lysosomal thiol-protease. This chain is Calpain-14 (CAPN14), found in Homo sapiens (Human).